A 303-amino-acid chain; its full sequence is Sulfate adenylyltransferase subunit 2 (303 aa).

It belongs to the PAPS reductase family. CysD subfamily. As to quaternary structure, heterodimer composed of CysD, the smaller subunit, and CysN.

It catalyses the reaction sulfate + ATP + H(+) = adenosine 5'-phosphosulfate + diphosphate. Its pathway is sulfur metabolism; hydrogen sulfide biosynthesis; sulfite from sulfate: step 1/3. With CysN forms the ATP sulfurylase (ATPS) that catalyzes the adenylation of sulfate producing adenosine 5'-phosphosulfate (APS) and diphosphate, the first enzymatic step in sulfur assimilation pathway. APS synthesis involves the formation of a high-energy phosphoric-sulfuric acid anhydride bond driven by GTP hydrolysis by CysN coupled to ATP hydrolysis by CysD. The polypeptide is Sulfate adenylyltransferase subunit 2 (Aliarcobacter butzleri (strain RM4018) (Arcobacter butzleri)).